The following is a 146-amino-acid chain: Hemoglobin subunit beta (146 aa).

Residue V1 is modified to N-acetylvaline. Residues 2 to 146 (HLTAEEKAAV…VATALAHKYH (145 aa)) form the Globin domain. T12 carries the post-translational modification Phosphothreonine. A Phosphoserine modification is found at S44. K59 is modified (N6-acetyllysine). Position 63 (H63) interacts with heme b. Position 82 is an N6-acetyllysine (K82). H92 lines the heme b pocket. C93 is modified (S-nitrosocysteine). K144 is modified (N6-acetyllysine).

It belongs to the globin family. As to quaternary structure, heterotetramer of two alpha chains and two beta chains. Red blood cells.

Involved in oxygen transport from the lung to the various peripheral tissues. In Mustela lutreola (European mink), this protein is Hemoglobin subunit beta (HBB).